Reading from the N-terminus, the 826-residue chain is Breast cancer anti-estrogen resistance protein 3 homolog (826 aa).

An N-acetylalanine modification is found at A2. 4 positions are modified to phosphoserine: S32, S78, S83, and S182. The disordered stretch occupies residues 46 to 81 (SIHGTLPRKKKGPPPIRSCDNFSHVGTLPHSRSPRH). The region spanning 154–253 (WYHGRIPRQV…QSGAIIFQPV (100 aa)) is the SH2 domain. The tract at residues 268 to 287 (ASSPDRAHEGSLTEGRPDAA) is disordered. Residue S291 is modified to Phosphoserine. Residues 294–321 (VGGTQAREQGLPRGNLLRNKEKSGSQPA) form a disordered region. The residue at position 335 (K335) is an N6-methyllysine. Positions 348–406 (KLTPQSPSVGTSPCPNSPVFRTGSEPTLSPAVVRRVSSDARPGEALRGSDSQLCPKPPP) are disordered. The segment covering 350 to 361 (TPQSPSVGTSPC) has biased composition (polar residues). A phosphoserine mark is found at S359, S364, S376, and S472. The segment at 480–501 (DDDDRTRPWKPPPAPGDTVGED) is disordered. The region spanning 549 to 819 (DPKVIAQHLL…TALSRKLEPP (271 aa)) is the Ras-GEF domain. The mediates the interaction with BCAR1/p130CAS stretch occupies residues 745 to 749 (LATAR).

Part of a complex comprised of PTPRA, BCAR1, BCAR3 (via SH2 domain) and SRC; the formation of the complex is dependent on integrin mediated-tyrosine phosphorylation of PTPRA. Within the complex, interacts (via SH2 domain) with PTPRA (when phosphorylated on 'Tyr-797'). Interacts (via Ras-GEF domain) with BCAR1. Interacts (via Ras-GEF domain) with NEDD9. Interacts with PTK2/FAK1. Interacts with PTPN1. Interacts (via SH2 domain) with EGFR (when tyrosine-phosphorylated). Post-translationally, phosphorylated on tyrosine residues.

Its subcellular location is the cytoplasm. The protein resides in the cell junction. It is found in the focal adhesion. In terms of biological role, acts as an adapter protein downstream of several growth factor receptors to promote cell proliferation, migration, and redistribution of actin fibers. Specifically involved in INS/insulin signaling pathway by mediating MAPK1/ERK2-MAPK3/ERK1 activation and DNA synthesis. Promotes insulin-mediated membrane ruffling. In response to vasoconstrictor peptide EDN1, involved in the activation of RAP1 downstream of PTK2B via interaction with phosphorylated BCAR1. Inhibits cell migration and invasion via regulation of TGFB-mediated matrix digestion, actin filament rearrangement, and inhibition of invadopodia activity. May inhibit TGFB-SMAD signaling, via facilitating BCAR1 and SMAD2 and/or SMAD3 interaction. Regulates EGF-induced DNA synthesis. Required for the maintenance of ocular lens morphology and structural integrity, potentially via regulation of focal adhesion complex signaling. Acts upstream of PTPRA to regulate the localization of BCAR1 and PTPRA to focal adhesions, via regulation of SRC-mediated phosphorylation of PTPRA. Positively regulates integrin-induced tyrosine phosphorylation of BCAR1. Acts as a guanine nucleotide exchange factor (GEF) for small GTPases RALA, RAP1A and RRAS. However, in a contrasting study, lacks GEF activity towards RAP1. In Bos taurus (Bovine), this protein is Breast cancer anti-estrogen resistance protein 3 homolog (BCAR3).